Here is a 143-residue protein sequence, read N- to C-terminus: Putative aryl-alcohol dehydrogenase AAD15 (143 aa).

It belongs to the aldo/keto reductase family. Aldo/keto reductase 2 subfamily.

Putative aryl-alcohol dehydrogenase. The sequence is that of Putative aryl-alcohol dehydrogenase AAD15 (AAD15) from Saccharomyces cerevisiae (strain ATCC 204508 / S288c) (Baker's yeast).